Here is a 75-residue protein sequence, read N- to C-terminus: Dermaseptin-SP4 (75 aa).

A signal peptide spans 1-22 (MAFLKKSLFLVLFLGLVSLSMC). The propeptide occupies 23-45 (EEEKRENEVEEEQEDDEQSELRR). Proline amide is present on Pro-72. A propeptide spanning residues 74–75 (EQ) is cleaved from the precursor.

It belongs to the frog skin active peptide (FSAP) family. Dermaseptin subfamily. Expressed by the skin glands.

It is found in the secreted. Its subcellular location is the target cell membrane. Functionally, antimicrobial peptide with activity against Gram-positive and Gram-negative bacteria and fungi. Has been tested against E.coli (MIC=47.25-128 uM), S.aureus (MIC=189-512 uM), K.pneumoniae (MIC=189 uM) and C.albicans (MIC&gt;189 uM). Probably acts by disturbing membrane functions with its alpha-helical amphipathic structure. May penetrate bacterial membranes, but stay at the mammalian membrane surface. Shows a weak hemolytic activity. This is Dermaseptin-SP4 from Agalychnis spurrelli (Gliding leaf frog).